The sequence spans 284 residues: Pantothenate synthetase (284 aa).

32–39 (MGALHDGH) is a binding site for ATP. Residue H39 is the Proton donor of the active site. Q63 serves as a coordination point for (R)-pantoate. Q63 provides a ligand contact to beta-alanine. 149–152 (GEKD) lines the ATP pocket. Position 155 (Q155) interacts with (R)-pantoate. Residues I178 and 186–189 (MSSR) contribute to the ATP site.

Belongs to the pantothenate synthetase family. Homodimer.

The protein localises to the cytoplasm. The catalysed reaction is (R)-pantoate + beta-alanine + ATP = (R)-pantothenate + AMP + diphosphate + H(+). The protein operates within cofactor biosynthesis; (R)-pantothenate biosynthesis; (R)-pantothenate from (R)-pantoate and beta-alanine: step 1/1. Its function is as follows. Catalyzes the condensation of pantoate with beta-alanine in an ATP-dependent reaction via a pantoyl-adenylate intermediate. The sequence is that of Pantothenate synthetase from Roseobacter denitrificans (strain ATCC 33942 / OCh 114) (Erythrobacter sp. (strain OCh 114)).